We begin with the raw amino-acid sequence, 280 residues long: Protein MGF 505-3R (280 aa).

This sequence belongs to the asfivirus MGF 505 family.

Its function is as follows. Plays a role in virus cell tropism, and may be required for efficient virus replication in macrophages. This is Protein MGF 505-3R from African swine fever virus (strain Badajoz 1971 Vero-adapted) (Ba71V).